A 193-amino-acid chain; its full sequence is LOB domain-containing protein 12 (193 aa).

The region spanning 7–108 (SPCASCKLLR…MQLAVAQAEI (102 aa)) is the LOB domain.

The protein belongs to the LOB domain-containing protein family. Expressed predominantly in roots, and at low levels in shoots, floral stems and open flowers.

The protein is LOB domain-containing protein 12 (LBD12) of Arabidopsis thaliana (Mouse-ear cress).